Reading from the N-terminus, the 64-residue chain is Large ribosomal subunit protein bL32 (64 aa).

Belongs to the bacterial ribosomal protein bL32 family.

This is Large ribosomal subunit protein bL32 from Mycoplasma mobile (strain ATCC 43663 / 163K / NCTC 11711) (Mesomycoplasma mobile).